The chain runs to 252 residues: Ribose-5-phosphate isomerase (252 aa).

Belongs to the ribose 5-phosphate isomerase family.

It is found in the cytoplasm. It catalyses the reaction aldehydo-D-ribose 5-phosphate = D-ribulose 5-phosphate. It participates in carbohydrate degradation; pentose phosphate pathway; D-ribose 5-phosphate from D-ribulose 5-phosphate (non-oxidative stage): step 1/1. The protein is Ribose-5-phosphate isomerase (RKI1) of Debaryomyces hansenii (strain ATCC 36239 / CBS 767 / BCRC 21394 / JCM 1990 / NBRC 0083 / IGC 2968) (Yeast).